We begin with the raw amino-acid sequence, 58 residues long: Protein YecU (58 aa).

The protein is Protein YecU of Escherichia coli (strain K12).